The chain runs to 777 residues: Acyl-CoA dehydrogenase family member 11 (777 aa).

FAD contacts are provided by residues 501-511 (FCMTEPDVASS), 509-511 (ASS), 535-537 (WSS), and Ser537. Ser511 contributes to the substrate binding site. 626 to 629 (GPGR) provides a ligand contact to substrate. FAD-binding positions include Arg654, Gln724, and 724–728 (QVCGG). Gly752 is a substrate binding site. Residues 753 to 755 (PDE) and Glu755 each bind FAD.

Belongs to the acyl-CoA dehydrogenase family. In terms of assembly, homodimer. Requires FAD as cofactor.

The protein localises to the peroxisome. The protein resides in the mitochondrion membrane. It carries out the reaction a 2,3-saturated acyl-CoA + oxidized [electron-transfer flavoprotein] + H(+) = a (2E)-enoyl-CoA + reduced [electron-transfer flavoprotein]. The catalysed reaction is docosanoyl-CoA + oxidized [electron-transfer flavoprotein] + H(+) = (2E)-docosenoyl-CoA + reduced [electron-transfer flavoprotein]. It catalyses the reaction tetracosanoyl-CoA + oxidized [electron-transfer flavoprotein] + H(+) = (2E)-tetracosenoyl-CoA + reduced [electron-transfer flavoprotein]. The enzyme catalyses eicosanoyl-CoA + oxidized [electron-transfer flavoprotein] + H(+) = (2E)-eicosenoyl-CoA + reduced [electron-transfer flavoprotein]. It carries out the reaction hexacosanoyl-CoA + oxidized [electron-transfer flavoprotein] + H(+) = (2E)-hexacosenoyl-CoA + reduced [electron-transfer flavoprotein]. The catalysed reaction is tricosanoyl-CoA + oxidized [electron-transfer flavoprotein] + H(+) = (2E)-tricosenoyl-CoA + reduced [electron-transfer flavoprotein]. It functions in the pathway lipid metabolism; fatty acid beta-oxidation. In terms of biological role, acyl-CoA dehydrogenase, that exhibits maximal activity towards saturated C22-CoA. Probably participates in beta-oxydation and energy production but could also play a role in the metabolism of specific fatty acids to control fatty acids composition of cellular lipids in brain. The chain is Acyl-CoA dehydrogenase family member 11 (ACAD11) from Gallus gallus (Chicken).